Consider the following 140-residue polypeptide: Neurotrophin-7 (140 aa).

The propeptide occupies proline 1 to arginine 7. 3 disulfide bridges follow: cysteine 21–cysteine 101, cysteine 64–cysteine 129, and cysteine 89–cysteine 131.

Belongs to the NGF-beta family.

The protein localises to the secreted. This is Neurotrophin-7 (ntf7) from Cyprinus carpio (Common carp).